The sequence spans 596 residues: Pentatricopeptide repeat-containing protein At5g38730 (596 aa).

12 PPR repeats span residues 132-166 (VSHV…GLKP), 167-201 (HLQA…GVVA), 202-236 (NIHV…GVFP), 237-271 (DIFT…GVAP), 272-302 (NIVT…IKDD), 306-340 (NHVT…GFSP), 341-375 (GVVT…KIEP), 376-410 (DNIT…GLKL), 411-445 (DMYS…GFSP), 446-480 (GYAT…GLCA), 481-515 (DVAL…GLVG), and 516-550 (DSVI…RLMV).

This sequence belongs to the PPR family. P subfamily.

This Arabidopsis thaliana (Mouse-ear cress) protein is Pentatricopeptide repeat-containing protein At5g38730.